A 355-amino-acid chain; its full sequence is NADH-quinone oxidoreductase subunit H (355 aa).

The next 8 helical transmembrane spans lie at 17–37 (IIMV…IAYI), 86–106 (GVFL…WAVI), 119–139 (VGIL…IMAG), 165–185 (IGFV…SAVV), 204–224 (ILNW…VSAL), 262–282 (YVAI…GWLP), 291–311 (WVPG…LFAM), and 332–352 (FLPL…FAGI).

It belongs to the complex I subunit 1 family. In terms of assembly, NDH-1 is composed of 14 different subunits. Subunits NuoA, H, J, K, L, M, N constitute the membrane sector of the complex.

Its subcellular location is the cell inner membrane. The catalysed reaction is a quinone + NADH + 5 H(+)(in) = a quinol + NAD(+) + 4 H(+)(out). NDH-1 shuttles electrons from NADH, via FMN and iron-sulfur (Fe-S) centers, to quinones in the respiratory chain. The immediate electron acceptor for the enzyme in this species is believed to be ubiquinone. Couples the redox reaction to proton translocation (for every two electrons transferred, four hydrogen ions are translocated across the cytoplasmic membrane), and thus conserves the redox energy in a proton gradient. This subunit may bind ubiquinone. The polypeptide is NADH-quinone oxidoreductase subunit H (Bradyrhizobium diazoefficiens (strain JCM 10833 / BCRC 13528 / IAM 13628 / NBRC 14792 / USDA 110)).